A 287-amino-acid chain; its full sequence is Light-independent protochlorophyllide reductase iron-sulfur ATP-binding protein (287 aa).

ATP contacts are provided by residues 10 to 15 and K39; that span reads GVGKST. A Mg(2+)-binding site is contributed by S14. [4Fe-4S] cluster contacts are provided by C95 and C129. 181 to 182 contacts ATP; it reads NR.

Belongs to the NifH/BchL/ChlL family. Homodimer. Protochlorophyllide reductase is composed of three subunits; BchL, BchN and BchB. Requires [4Fe-4S] cluster as cofactor.

The catalysed reaction is chlorophyllide a + oxidized 2[4Fe-4S]-[ferredoxin] + 2 ADP + 2 phosphate = protochlorophyllide a + reduced 2[4Fe-4S]-[ferredoxin] + 2 ATP + 2 H2O. It functions in the pathway porphyrin-containing compound metabolism; bacteriochlorophyll biosynthesis (light-independent). In terms of biological role, component of the dark-operative protochlorophyllide reductase (DPOR) that uses Mg-ATP and reduced ferredoxin to reduce ring D of protochlorophyllide (Pchlide) to form chlorophyllide a (Chlide). This reaction is light-independent. The L component serves as a unique electron donor to the NB-component of the complex, and binds Mg-ATP. In Heliobacterium modesticaldum (strain ATCC 51547 / Ice1), this protein is Light-independent protochlorophyllide reductase iron-sulfur ATP-binding protein.